We begin with the raw amino-acid sequence, 428 residues long: Glutamate-1-semialdehyde 2,1-aminomutase (428 aa).

K267 is subject to N6-(pyridoxal phosphate)lysine.

Belongs to the class-III pyridoxal-phosphate-dependent aminotransferase family. HemL subfamily. In terms of assembly, homodimer. It depends on pyridoxal 5'-phosphate as a cofactor.

The protein resides in the cytoplasm. The catalysed reaction is (S)-4-amino-5-oxopentanoate = 5-aminolevulinate. It participates in porphyrin-containing compound metabolism; protoporphyrin-IX biosynthesis; 5-aminolevulinate from L-glutamyl-tRNA(Glu): step 2/2. The polypeptide is Glutamate-1-semialdehyde 2,1-aminomutase (Desulforapulum autotrophicum (strain ATCC 43914 / DSM 3382 / VKM B-1955 / HRM2) (Desulfobacterium autotrophicum)).